A 264-amino-acid polypeptide reads, in one-letter code: Phosphatidylglycerol--prolipoprotein diacylglyceryl transferase (264 aa).

7 helical membrane passes run 14–34, 57–77, 89–109, 127–147, 176–196, 202–222, and 235–255; these read VGPL…LLFM, LLLY…VLFF, ILAI…VLVA, FIAP…FING, QLYQ…VYSA, KAVS…AEFF, and LGLS…VGLL. Arginine 140 serves as a coordination point for a 1,2-diacyl-sn-glycero-3-phospho-(1'-sn-glycerol).

Belongs to the Lgt family.

Its subcellular location is the cell inner membrane. The enzyme catalyses L-cysteinyl-[prolipoprotein] + a 1,2-diacyl-sn-glycero-3-phospho-(1'-sn-glycerol) = an S-1,2-diacyl-sn-glyceryl-L-cysteinyl-[prolipoprotein] + sn-glycerol 1-phosphate + H(+). It participates in protein modification; lipoprotein biosynthesis (diacylglyceryl transfer). Catalyzes the transfer of the diacylglyceryl group from phosphatidylglycerol to the sulfhydryl group of the N-terminal cysteine of a prolipoprotein, the first step in the formation of mature lipoproteins. The polypeptide is Phosphatidylglycerol--prolipoprotein diacylglyceryl transferase (Aromatoleum aromaticum (strain DSM 19018 / LMG 30748 / EbN1) (Azoarcus sp. (strain EbN1))).